We begin with the raw amino-acid sequence, 906 residues long: Coatomer subunit beta' (906 aa).

WD repeat units follow at residues 13-52 (ARSD…LVKT), 55-94 (VCDL…RVHM), 97-136 (AHSD…SCSQ), 140-180 (GHTH…PNFT), 183-224 (GHEK…CVQT), 227-266 (GHAQ…LEST), 350-388 (SCEI…NKSF), and 390-425 (SAQE…KSFK). K627 carries the post-translational modification N6-acetyllysine. The WD 9 repeat unit spans residues 746–783 (IRTGRLPEAAFLARTYLPSQVSRVVKLWRENLSKVNQK). Positions 837-862 (EEAKGFQPSRSTAQQELDGKPASPTP) are disordered. S859 is modified (phosphoserine). T861 bears the Phosphothreonine mark. Residues 866 to 890 (ASHTANKEEKSLLELEVDLDNLELE) are a coiled coil.

It belongs to the WD repeat COPB2 family. Oligomeric complex that consists of at least the alpha, beta, beta', gamma, delta, epsilon and zeta subunits. Probably interacts with PEX11A. Interacts with SCYL1. Interacts with JAGN1.

The protein localises to the cytoplasm. The protein resides in the cytosol. It is found in the golgi apparatus membrane. It localises to the cytoplasmic vesicle. Its subcellular location is the COPI-coated vesicle membrane. Its function is as follows. The coatomer is a cytosolic protein complex that binds to dilysine motifs and reversibly associates with Golgi non-clathrin-coated vesicles, which further mediate biosynthetic protein transport from the ER, via the Golgi up to the trans Golgi network. Coatomer complex is required for budding from Golgi membranes, and is essential for the retrograde Golgi-to-ER transport of dilysine-tagged proteins. In mammals, the coatomer can only be recruited by membranes associated to ADP-ribosylation factors (ARFs), which are small GTP-binding proteins; the complex also influences the Golgi structural integrity, as well as the processing, activity, and endocytic recycling of LDL receptors. Functionally, this coatomer complex protein, essential for Golgi budding and vesicular trafficking, is a selective binding protein (RACK) for protein kinase C, epsilon type. It binds to Golgi membranes in a GTP-dependent manner. The polypeptide is Coatomer subunit beta' (COPB2) (Macaca fascicularis (Crab-eating macaque)).